We begin with the raw amino-acid sequence, 157 residues long: 6,7-dimethyl-8-ribityllumazine synthase 2 (157 aa).

5-amino-6-(D-ribitylamino)uracil is bound by residues Trp21, 55 to 57 (AYE), and 79 to 81 (FVV). Arg87 functions as the Proton donor in the catalytic mechanism. 5-amino-6-(D-ribitylamino)uracil is bound at residue Ser112. His126 serves as a coordination point for (2S)-2-hydroxy-3-oxobutyl phosphate.

The protein belongs to the DMRL synthase family. In terms of assembly, homodecamer, arranged as a dimer of pentamers.

It catalyses the reaction (2S)-2-hydroxy-3-oxobutyl phosphate + 5-amino-6-(D-ribitylamino)uracil = 6,7-dimethyl-8-(1-D-ribityl)lumazine + phosphate + 2 H2O + H(+). The protein operates within cofactor biosynthesis; riboflavin biosynthesis; riboflavin from 2-hydroxy-3-oxobutyl phosphate and 5-amino-6-(D-ribitylamino)uracil: step 1/2. Functionally, catalyzes the formation of 6,7-dimethyl-8-ribityllumazine by condensation of 5-amino-6-(D-ribitylamino)uracil with 3,4-dihydroxy-2-butanone 4-phosphate. This is the penultimate step in the biosynthesis of riboflavin. This Mesorhizobium japonicum (strain LMG 29417 / CECT 9101 / MAFF 303099) (Mesorhizobium loti (strain MAFF 303099)) protein is 6,7-dimethyl-8-ribityllumazine synthase 2 (ribH2).